The chain runs to 411 residues: Serpin A3-1 (411 aa).

The first 24 residues, 1–24 (MRAERTSFLLALGLLVAGIRSVHC), serve as a signal peptide directing secretion. Residues asparagine 100, asparagine 180, asparagine 230, and asparagine 264 are each glycosylated (N-linked (GlcNAc...) asparagine).

Belongs to the serpin family. In terms of assembly, homodimer. N-glycosylated. As to expression, detected in all tissues examined (at protein level). Abundantly expressed in liver, kidney and spleen. Lowest levels were observed in diaphragm muscle.

It is found in the cytoplasmic vesicle. It localises to the secretory vesicle. The protein localises to the chromaffin granule. The protein resides in the secreted. Potent inhibitor of the serine proteases elastase and trypsin. Moderately inhibits the serine proteases plasmin and chymotrypsin, and the thiol protease proenkephalin-processing enzyme. Does not inhibit the serine proteases cathepsin G, furin, kallikrein, thrombin, tissue plasminogen activator and urokinase, or the cysteine proteases cathepsin B, cathepsin L and papain. This Bos taurus (Bovine) protein is Serpin A3-1.